Here is a 402-residue protein sequence, read N- to C-terminus: Putative cytochrome P450 133B1 (402 aa).

Residue Cys-348 participates in heme binding.

Belongs to the cytochrome P450 family. Heme is required as a cofactor.

The polypeptide is Putative cytochrome P450 133B1 (cyp133B1) (Xylella fastidiosa (strain 9a5c)).